Here is a 534-residue protein sequence, read N- to C-terminus: Protein tweety homolog 2 (534 aa).

The Extracellular segment spans residues 1 to 44 (MQAARVDYIAPWWVVWLHSVPHVGLRLQPVNSTFSPGDESYQES). N-linked (GlcNAc...) asparagine glycosylation is present at N31. The helical transmembrane segment at 45 to 65 (LLFLGLVAAVCLGLNLIFLVA) threads the bilayer. The Cytoplasmic portion of the chain corresponds to 66-87 (YLVCACHCRRDDAVQTKQHHSC). A helical membrane pass occupies residues 88 to 108 (CITWTAVVAGLICCAAVGVGF). The Extracellular portion of the chain corresponds to 109 to 213 (YGNSETNDGA…QTGYVEYYRW (105 aa)). Positions 113 and 116 each coordinate Ca(2+). N-linked (GlcNAc) asparagine glycosylation occurs at N129. The short motif at 164–166 (RGD) is the RGD element. A Phosphothreonine modification is found at T199. Residues 214–234 (LSYLLLFILDLVICLIACLGL) form a helical membrane-spanning segment. At 235–240 (AKRSKC) the chain is on the cytoplasmic side. A helical membrane pass occupies residues 241–261 (LLASMLCCGALSLLLSWASLA). The Extracellular segment spans residues 262-388 (ADGSAAVATS…AGICYDGLQG (127 aa)). 2 disulfide bridges follow: C274–C382 and C300–C367. N-linked (GlcNAc...) asparagine glycosylation is present at N283. N-linked (GlcNAc) asparagine glycosylation occurs at N352. Residues 389 to 409 (LLYLGLFSFLAALAFSTMICA) form a helical membrane-spanning segment. Topologically, residues 410 to 534 (GPRAWKHFTT…LRHYGNQFPA (125 aa)) are cytoplasmic. S504 is subject to Phosphoserine. The PY-motif; mediates interaction with NEDD4L motif lies at 506–509 (PPTY).

Belongs to the tweety family. Homodimer. Forms cis-homodimers in the presence of Ca(+2) and forms monomers and trans-dimers in the absence of Ca(2+). Interacts with NEDD4L. In terms of processing, N- Glycosylated. Contains high-mannose, hybrid and complex oligosaccharides. Ubiquitinated by NEDD4L, leading to its proteasomal degradation. As to expression, expressed at higher level in brain and testis and at lower levels in heart, ovary, spleen and peripheral blood leukocytes. Up-regulated in 13 of 16 renal cell carcinoma samples examined. Up-regulated in colon carcinoma.

The protein localises to the cell membrane. The catalysed reaction is chloride(in) = chloride(out). It catalyses the reaction L-glutamate(out) = L-glutamate(in). In terms of biological role, calcium-independent, swelling-dependent volume-regulated anion channel (VRAC-swell) which plays a pivotal role in the process of regulatory volume decrease (RVD) in the brain through the efflux of anions like chloride and organic osmolytes like glutamate. Probable large-conductance Ca(2+)-activated chloride channel. The chain is Protein tweety homolog 2 (TTYH2) from Homo sapiens (Human).